Here is a 154-residue protein sequence, read N- to C-terminus: MFKEFKIFIMRGNVVDLAVGIVIGAAFGAIVNSLVKDVLMPPIGLLLGNVDFGNLFIVLKEGAIGGPYESLLVAQTAGAVTINYGVFINALINFLILAMAIFFFVVRPLNQLAARQKSKEAVIPAQTDKKDCPYCDTQIPLKASKCPYCTSELM.

Helical transmembrane passes span 14 to 34 (VVDL…VNSL) and 86 to 106 (VFIN…FFVV).

The protein belongs to the MscL family. Homopentamer.

It is found in the cell membrane. In terms of biological role, channel that opens in response to stretch forces in the membrane lipid bilayer. May participate in the regulation of osmotic pressure changes within the cell. The sequence is that of Large-conductance mechanosensitive channel from Dehalococcoides mccartyi (strain CBDB1).